Reading from the N-terminus, the 208-residue chain is Imidazoleglycerol-phosphate dehydratase (208 aa).

It belongs to the imidazoleglycerol-phosphate dehydratase family.

The protein resides in the cytoplasm. The enzyme catalyses D-erythro-1-(imidazol-4-yl)glycerol 3-phosphate = 3-(imidazol-4-yl)-2-oxopropyl phosphate + H2O. The protein operates within amino-acid biosynthesis; L-histidine biosynthesis; L-histidine from 5-phospho-alpha-D-ribose 1-diphosphate: step 6/9. The sequence is that of Imidazoleglycerol-phosphate dehydratase from Pseudarthrobacter chlorophenolicus (strain ATCC 700700 / DSM 12829 / CIP 107037 / JCM 12360 / KCTC 9906 / NCIMB 13794 / A6) (Arthrobacter chlorophenolicus).